We begin with the raw amino-acid sequence, 716 residues long: ATP-dependent DNA helicase DinG (716 aa).

Residues 17–294 (ALQEQIPDFI…TCMEQFRPKT (278 aa)) form the Helicase ATP-binding domain. 54-61 (APTGVGKT) is an ATP binding site. Cys120 contacts [4Fe-4S] cluster. The short motif at 131–134 (EPTQ) is the DEAH box element. Residues Cys194, Cys199, and Cys205 each coordinate [4Fe-4S] cluster. The short motif at 248–251 (DEGH) is the DEAH box element. In terms of domain architecture, Helicase C-terminal spans 517–698 (HIAEMAAFFR…VFPIEQPEVP (182 aa)).

The protein belongs to the helicase family. DinG subfamily. Type 1 sub-subfamily. It depends on [4Fe-4S] cluster as a cofactor.

It catalyses the reaction Couples ATP hydrolysis with the unwinding of duplex DNA at the replication fork by translocating in the 5'-3' direction. This creates two antiparallel DNA single strands (ssDNA). The leading ssDNA polymer is the template for DNA polymerase III holoenzyme which synthesizes a continuous strand.. The enzyme catalyses ATP + H2O = ADP + phosphate + H(+). DNA-dependent ATPase and 5'-3' DNA helicase. Unwinds D-loops, R-loops, forked DNA and G-quadruplex DNA. The protein is ATP-dependent DNA helicase DinG of Escherichia coli O157:H7.